Here is a 157-residue protein sequence, read N- to C-terminus: Glutathione peroxidase homolog BsaA (157 aa).

The active site involves Cys35.

Belongs to the glutathione peroxidase family.

The sequence is that of Glutathione peroxidase homolog BsaA (bsaA) from Halalkalibacterium halodurans (strain ATCC BAA-125 / DSM 18197 / FERM 7344 / JCM 9153 / C-125) (Bacillus halodurans).